The primary structure comprises 1381 residues: MEVLMAERADLVFHNKVIDGTAMKRLISRLIDHFGMAYTSHILDQVKTMGFQQATATSISLGIDDLLTIPSKGWLVQDAEQQSLILEKHHHYGNVHAVEKLRQSIEIWYATSEYLRQEMHPNFRMTDPSNPVHIMSFSGARGNASQVHQLVGMRGLMSDPQGQMIDLPIQSNLREGLSLTEYLISCYGARKGVVDTAVRTSDAGYLTRRLVEVVQHIVVRRTDCGTIRGISVSPRNGIGMTEKMLIQTLIGRVLADDIYMGLRCIAARNQDIGVGLVNRFIAFRAQSIYIRTPFICRSTSWICRLCYGRSPTHGDLVELGEAVGIIAGQSIGEPGTQLTLRTFHTGGVFTGGTAEHVRAPFNGKIKFNEDLVHPTRTRHGHPAFLCYIDLYVTIESQDILHNVNIPPKSFLLVQNDQYVESEQVIAEIRARTSTFNFKERVRKHIYSDSEGEMHWSTDVYHAPEYTYGNVHLLPKTSHLWILSGGPRRSSLVPFSLHKDQDQMNIHSLSVEQRESSDLSVTNDRARHKLFSSDPSGKKEGKILDYSGPARIISNGHWNFIYPAILHENSYLLAKRRRNRFIIPFQYDQEREKELMPRSGISIEIPINGILRRNSILAYFDDPRYRRSSSGITKYGTVEVDSIVKKEDLIEYRGAKEFSPKYQMKVDRFFFIPEEVHILPGSSSIMVRNNSIIGVDTRITLNTRSRIGGLVRVERKKKRIELKIFSGDIHFPGEADKISRHSGILIPPGTGKKNSKESKKLQNWIYVQRITPTKKKYFVSVRPVVTYEIADGINLATLFPQDLLQERDNVKFRVVNSILYRNGKPIRGIYYTSIQLVRTCLVLNWDQDRNGSIEKVKASIVEVRANDLIRDFIRIDLVKSPISYTGKRNDMAGSGLIPDNGSDHTNINPFYSKVRRIQSLTQHQGTIRTLLNRNKECQSFLILSSSNCSRIGPFNGSKSHNVTKESIQIKEDPMIPIRNSLGPLGTVPKIANFDSPYYLITHNQILLNKYLLLDNLKQTFQVLKYYLMDENGRIYNPYPCRNIIFHPFDLTWCFLHHDYCEKTSTIIVLGQFICENENVCISKYGPQIKSGQVLIVHVDSLVIRSAKPHLATPGATVHGHYGEILYEGDTLVTFIYEKSRSGDITQGLPKVEQVLEVRSVDSISMNLEKRVEGWNEHIKRILGIPWGFLIGAELTIAQSRISLVNKIQKVYRSQGVQIHNRHIEIIVRQITSKVLVSEDGMSNVFSPGELIGLLRAERTGRSLEEAICYRAILWGITRASLNTQSFISEASFQETARVLAKAALRGRIDWLKGLKENVVLGGMIPVGTGFKGLVHRSRQDNNIPLEIKKKNLFEGEIRDILFHHRELFGSCIPNNFHNTPEQ.

Residues cysteine 224, cysteine 296, cysteine 303, and cysteine 306 each coordinate Zn(2+).

It belongs to the RNA polymerase beta' chain family. RpoC2 subfamily. In plastids the minimal PEP RNA polymerase catalytic core is composed of four subunits: alpha, beta, beta', and beta''. When a (nuclear-encoded) sigma factor is associated with the core the holoenzyme is formed, which can initiate transcription. The cofactor is Zn(2+).

It is found in the plastid. The protein resides in the chloroplast. It catalyses the reaction RNA(n) + a ribonucleoside 5'-triphosphate = RNA(n+1) + diphosphate. Its function is as follows. DNA-dependent RNA polymerase catalyzes the transcription of DNA into RNA using the four ribonucleoside triphosphates as substrates. The sequence is that of DNA-directed RNA polymerase subunit beta'' from Drimys granadensis.